The primary structure comprises 560 residues: MEGEMKCPIEEIREKPEMRKAQQTYEVQVEVEDTPDTTFSWRKLWAFTGPGFLMSIAYLDPGNIESDLQAGAISYFKLIWVLLVAHIMGLLLQRLAARLGVVSGKHMAEIAFSYYPKIPRLVLWMLVESAIVGSDMQEVIGTAISFYLLSNGVIPLWAGVLITICDTFTFLFLEKYGVRKFEAFFCFLITCMAITFGYEFGVSAPDAGKMFSGMFVPWCNGCDNNMVMQGVAIIGAVIMPHNFYLHSALVKSRRVDRRRAEKVTEANKYFFIESAFALFVSFIINTLVISVFAQGMYGKTNQDIRDTCYNNTHNGMPDFYKVEFPANNDAAQSDIYHAGIFLGCTFGIFALYVWAVGILAAGQSSTMTGTYAGQFAMEGFIQIKLPQWKRILITRSLAILPTLAVVIFSGGIDNISSLNDFLNCLQLIQLPFALIPVLTFVSDRNIMHEYKLASVSKVVSIVISLIILFINFYFLYSWIGSTFGYNAVSIPITIFCAIFYIIFIAYLTYYCLVAMEFISPIQTKWLAEPIYHDFDAPWLEDSENPSTKNTISDDELSMRY.

At 1–43 (MEGEMKCPIEEIREKPEMRKAQQTYEVQVEVEDTPDTTFSWRK) the chain is on the cytoplasmic side. Residues 44 to 64 (LWAFTGPGFLMSIAYLDPGNI) traverse the membrane as a helical segment. Residues 65–71 (ESDLQAG) lie on the Extracellular side of the membrane. The chain crosses the membrane as a helical span at residues 72 to 92 (AISYFKLIWVLLVAHIMGLLL). The Cytoplasmic portion of the chain corresponds to 93-120 (QRLAARLGVVSGKHMAEIAFSYYPKIPR). Residues 121 to 141 (LVLWMLVESAIVGSDMQEVIG) traverse the membrane as a helical segment. At 142 to 152 (TAISFYLLSNG) the chain is on the extracellular side. A helical membrane pass occupies residues 153–173 (VIPLWAGVLITICDTFTFLFL). Residues 174 to 182 (EKYGVRKFE) lie on the Cytoplasmic side of the membrane. The helical transmembrane segment at 183–203 (AFFCFLITCMAITFGYEFGVS) threads the bilayer. Topologically, residues 204 to 229 (APDAGKMFSGMFVPWCNGCDNNMVMQ) are extracellular. The chain crosses the membrane as a helical span at residues 230 to 250 (GVAIIGAVIMPHNFYLHSALV). The Cytoplasmic segment spans residues 251 to 268 (KSRRVDRRRAEKVTEANK). Residues 269-289 (YFFIESAFALFVSFIINTLVI) form a helical membrane-spanning segment. Topologically, residues 290–339 (SVFAQGMYGKTNQDIRDTCYNNTHNGMPDFYKVEFPANNDAAQSDIYHAG) are extracellular. Asn-310 is a glycosylation site (N-linked (GlcNAc...) asparagine). The chain crosses the membrane as a helical span at residues 340-360 (IFLGCTFGIFALYVWAVGILA). Topologically, residues 361–390 (AGQSSTMTGTYAGQFAMEGFIQIKLPQWKR) are cytoplasmic. A helical membrane pass occupies residues 391 to 411 (ILITRSLAILPTLAVVIFSGG). Topologically, residues 412–420 (IDNISSLND) are extracellular. Asn-414 carries an N-linked (GlcNAc...) asparagine glycan. A helical membrane pass occupies residues 421–441 (FLNCLQLIQLPFALIPVLTFV). At 442–458 (SDRNIMHEYKLASVSKV) the chain is on the cytoplasmic side. Residues 459-479 (VSIVISLIILFINFYFLYSWI) form a helical membrane-spanning segment. At 480–486 (GSTFGYN) the chain is on the extracellular side. The helical transmembrane segment at 487-507 (AVSIPITIFCAIFYIIFIAYL) threads the bilayer. The Cytoplasmic segment spans residues 508 to 560 (TYYCLVAMEFISPIQTKWLAEPIYHDFDAPWLEDSENPSTKNTISDDELSMRY).

This sequence belongs to the NRAMP family. Expressed in dopaminergic neurons (at protein level). Expressed in intestine with a weaker expression in the most proximal and distal regions. Weakly expressed in the hyp1-6, hyp7 and hyp8-12 hypodermis and in head and tail neurons.

The protein resides in the apical cell membrane. The protein localises to the cytoplasmic vesicle membrane. In terms of biological role, probable divalent metal ion transporter which regulates the uptake of several heavy metals such as Mn(2+), Al(3+) and iron. Plays a role in modulating Al(3+)-induced dopamine (DA) neuron degeneration through the intracellular sequestration of Al(3+). In Caenorhabditis elegans, this protein is NRAMP-like transporter smf-3.